Here is a 501-residue protein sequence, read N- to C-terminus: ATP synthase subunit alpha (501 aa).

An ATP-binding site is contributed by 169–176 (GDRQTGKT).

This sequence belongs to the ATPase alpha/beta chains family. In terms of assembly, F-type ATPases have 2 components, CF(1) - the catalytic core - and CF(0) - the membrane proton channel. CF(1) has five subunits: alpha(3), beta(3), gamma(1), delta(1), epsilon(1). CF(0) has three main subunits: a(1), b(2) and c(9-12). The alpha and beta chains form an alternating ring which encloses part of the gamma chain. CF(1) is attached to CF(0) by a central stalk formed by the gamma and epsilon chains, while a peripheral stalk is formed by the delta and b chains.

Its subcellular location is the cell inner membrane. It carries out the reaction ATP + H2O + 4 H(+)(in) = ADP + phosphate + 5 H(+)(out). Its function is as follows. Produces ATP from ADP in the presence of a proton gradient across the membrane. The alpha chain is a regulatory subunit. In Campylobacter jejuni subsp. doylei (strain ATCC BAA-1458 / RM4099 / 269.97), this protein is ATP synthase subunit alpha.